A 484-amino-acid polypeptide reads, in one-letter code: Cobyric acid synthase (484 aa).

The GATase cobBQ-type domain maps to 248–435; that stretch reads VLKVIVPVLP…LHGLFEGSQS (188 aa). Cys-329 serves as the catalytic Nucleophile. The active site involves His-427.

Belongs to the CobB/CobQ family. CobQ subfamily.

It functions in the pathway cofactor biosynthesis; adenosylcobalamin biosynthesis. Catalyzes amidations at positions B, D, E, and G on adenosylcobyrinic A,C-diamide. NH(2) groups are provided by glutamine, and one molecule of ATP is hydrogenolyzed for each amidation. The chain is Cobyric acid synthase from Pseudomonas putida (strain W619).